A 594-amino-acid polypeptide reads, in one-letter code: UvrABC system protein C (594 aa).

One can recognise a GIY-YIG domain in the interval 14–91 (DSPGCYLHKD…IQENMPKYNI (78 aa)). A UVR domain is found at 196 to 231 (DKIIDDLRSKMLEASHNQEFERAAEYRDLISGIATM).

The protein belongs to the UvrC family. In terms of assembly, interacts with UvrB in an incision complex.

The protein localises to the cytoplasm. Its function is as follows. The UvrABC repair system catalyzes the recognition and processing of DNA lesions. UvrC both incises the 5' and 3' sides of the lesion. The N-terminal half is responsible for the 3' incision and the C-terminal half is responsible for the 5' incision. This is UvrABC system protein C from Streptococcus equi subsp. equi (strain 4047).